The sequence spans 328 residues: Sulfate adenylyltransferase subunit 2 (328 aa).

A disordered region spans residues 305–328; sequence ERQGRVIDRDSTGSMERKKAEGYF.

Belongs to the PAPS reductase family. CysD subfamily. In terms of assembly, heterodimer composed of CysD, the smaller subunit, and CysN.

It carries out the reaction sulfate + ATP + H(+) = adenosine 5'-phosphosulfate + diphosphate. It participates in sulfur metabolism; hydrogen sulfide biosynthesis; sulfite from sulfate: step 1/3. Its function is as follows. With CysN forms the ATP sulfurylase (ATPS) that catalyzes the adenylation of sulfate producing adenosine 5'-phosphosulfate (APS) and diphosphate, the first enzymatic step in sulfur assimilation pathway. APS synthesis involves the formation of a high-energy phosphoric-sulfuric acid anhydride bond driven by GTP hydrolysis by CysN coupled to ATP hydrolysis by CysD. In Rhodopseudomonas palustris (strain BisB18), this protein is Sulfate adenylyltransferase subunit 2.